A 125-amino-acid chain; its full sequence is Cyclic diguanosine monophosphate-binding protein PA4608 (125 aa).

Residue 6–13 (DERRRFHR) coordinates 3',3'-c-di-GMP. A PilZ domain is found at 7-103 (ERRRFHRIAF…SISHLRRLVE (97 aa)). The short motif at 9 to 13 (RRFHR) is the RXXXR motif; surrounds the surface of the c-di-GMP binding site element. A DXSXXG motif; surrounds the surface of the c-di-GMP binding site motif is present at residues 35–40 (DVSLHG). Trp77 provides a ligand contact to 3',3'-c-di-GMP.

In terms of assembly, monomer in both c-di-GMP-bound and free forms.

Functionally, binds the second messenger bis-(3'-5') cyclic dimeric guanosine monophosphate (c-di-GMP). Can bind two c-di-GMP molecules per monomer. May play a role in bacterial second-messenger regulated processes. Binding to c-di-GMP induces a conformational change of the C- and N-termini resulting in the exposure of a highly negative surface on one side of the protein to a possible effector protein. The chain is Cyclic diguanosine monophosphate-binding protein PA4608 from Pseudomonas aeruginosa (strain ATCC 15692 / DSM 22644 / CIP 104116 / JCM 14847 / LMG 12228 / 1C / PRS 101 / PAO1).